We begin with the raw amino-acid sequence, 377 residues long: Succinyl-diaminopimelate desuccinylase (377 aa).

His67 is a Zn(2+) binding site. Residue Asp69 is part of the active site. Residue Asp100 participates in Zn(2+) binding. Glu134 acts as the Proton acceptor in catalysis. The Zn(2+) site is built by Glu135, Glu163, and His349.

It belongs to the peptidase M20A family. DapE subfamily. Homodimer. Zn(2+) serves as cofactor. It depends on Co(2+) as a cofactor.

The enzyme catalyses N-succinyl-(2S,6S)-2,6-diaminopimelate + H2O = (2S,6S)-2,6-diaminopimelate + succinate. It participates in amino-acid biosynthesis; L-lysine biosynthesis via DAP pathway; LL-2,6-diaminopimelate from (S)-tetrahydrodipicolinate (succinylase route): step 3/3. Its function is as follows. Catalyzes the hydrolysis of N-succinyl-L,L-diaminopimelic acid (SDAP), forming succinate and LL-2,6-diaminopimelate (DAP), an intermediate involved in the bacterial biosynthesis of lysine and meso-diaminopimelic acid, an essential component of bacterial cell walls. The protein is Succinyl-diaminopimelate desuccinylase of Haemophilus influenzae (strain PittEE).